The chain runs to 192 residues: Fe/S biogenesis protein NfuA (192 aa).

The [4Fe-4S] cluster site is built by Cys149 and Cys152.

Belongs to the NfuA family. Homodimer. The cofactor is [4Fe-4S] cluster.

Involved in iron-sulfur cluster biogenesis. Binds a 4Fe-4S cluster, can transfer this cluster to apoproteins, and thereby intervenes in the maturation of Fe/S proteins. Could also act as a scaffold/chaperone for damaged Fe/S proteins. This is Fe/S biogenesis protein NfuA from Shewanella frigidimarina (strain NCIMB 400).